The chain runs to 72 residues: Protein kish-A (72 aa).

The first 26 residues, 1–26 (MSAIFNFQSLLTVILLLICTCAYIRS), serve as a signal peptide directing secretion. The Extracellular segment spans residues 27 to 53 (LAPSLLDKNKTGLLGIFWKCARIGERK). Residue Asn35 is glycosylated (N-linked (GlcNAc...) asparagine). Residues 54 to 71 (SPYVAVCCVVMAFSILFV) form a helical membrane-spanning segment. A topological domain (cytoplasmic) is located at residue Gln72.

This sequence belongs to the KISH family.

It is found in the golgi apparatus membrane. Its function is as follows. Involved in the early part of the secretory pathway. The chain is Protein kish-A (TMEM167A) from Gallus gallus (Chicken).